We begin with the raw amino-acid sequence, 226 residues long: NADH-ubiquinone oxidoreductase 19.3 kDa subunit, mitochondrial (226 aa).

A disordered region spans residues 40–68; that stretch reads ATGAVAPAGAQHGIARRERREVPLPSQEG. Positions 101, 102, 166, and 196 each coordinate [4Fe-4S] cluster.

This sequence belongs to the complex I 20 kDa subunit family. Complex I is composed of about 40 different subunits. This is a component of the iron-sulfur (IP) fragment of the enzyme. [4Fe-4S] cluster is required as a cofactor.

Its subcellular location is the mitochondrion. It catalyses the reaction a ubiquinone + NADH + 5 H(+)(in) = a ubiquinol + NAD(+) + 4 H(+)(out). Functionally, core subunit of the mitochondrial membrane respiratory chain NADH dehydrogenase (Complex I) that is believed to belong to the minimal assembly required for catalysis. Complex I functions in the transfer of electrons from NADH to the respiratory chain. The immediate electron acceptor for the enzyme is believed to be ubiquinone. This chain is NADH-ubiquinone oxidoreductase 19.3 kDa subunit, mitochondrial, found in Neurospora crassa (strain ATCC 24698 / 74-OR23-1A / CBS 708.71 / DSM 1257 / FGSC 987).